Here is a 318-residue protein sequence, read N- to C-terminus: Mitochondrial thiamine pyrophosphate carrier (318 aa).

3 Solcar repeats span residues 13-106, 116-202, and 214-309; these read ISNV…LTEL, RDFS…LKRA, and NGNF…FCNF. A helical transmembrane segment spans residues 19–39; the sequence is AVAGSVSGLVTRVLISPLDVI. Position 51 is a phosphoserine (Ser-51). Transmembrane regions (helical) follow at residues 87–107, 122–142, 173–193, and 220–240; these read LLSIGYGAVQFLSFEALTELV, FLCGGLSACVATLAVHPVDVL, VFYKGLNPTLIAIFPYAGFQF, and LLCGSGAGVISKTLTYPLDLF. The short motif at 241–246 is the Substrate recognition element; that stretch reads KKRLQV. The chain crosses the membrane as a helical span at residues 293 to 313; it reads ALSTGLVFFWYELFCNFFHHM.

It belongs to the mitochondrial carrier (TC 2.A.29) family.

The protein resides in the mitochondrion membrane. The enzyme catalyses thiamine phosphate(out) + thiamine diphosphate(in) = thiamine phosphate(in) + thiamine diphosphate(out). Mitochondrial transporter mediating uptake of thiamine diphosphate into mitochondria. It is not clear if the antiporter activity is affected by the membrane potential or by the proton electrochemical gradient. The chain is Mitochondrial thiamine pyrophosphate carrier (SLC25A19) from Bos taurus (Bovine).